A 423-amino-acid chain; its full sequence is Protein CLP1 homolog (423 aa).

ATP is bound by residues Glu16, Lys57, and 119–124 (DVGKST).

Belongs to the Clp1 family. Clp1 subfamily.

The protein resides in the nucleus. In terms of biological role, required for endonucleolytic cleavage during polyadenylation-dependent pre-mRNA 3'-end formation. The protein is Protein CLP1 homolog (cbc) of Drosophila yakuba (Fruit fly).